The following is a 179-amino-acid chain: Transmembrane protein 196 (179 aa).

The next 4 helical transmembrane spans lie at 11 to 31, 44 to 61, 67 to 87, and 100 to 120; these read LLVL…VGAV, LGDS…ILCA, LVMI…ILNF, and LYPL…GCTL.

The protein resides in the cytoplasm. Its subcellular location is the membrane. In terms of biological role, acts as a tumor suppressor in lung cancer. Inhibits tumor cell growth by inhibiting cell proliferation and migration and promoting cell apoptosis. Inhibits metastasis of lung cancer by suppressing beta-catenin expression in the Wnt/beta-catenin signaling pathway. This is Transmembrane protein 196 (TMEM196) from Pongo abelii (Sumatran orangutan).